Here is a 227-residue protein sequence, read N- to C-terminus: Putative ankyrin repeat protein RF_0314 (227 aa).

ANK repeat units lie at residues 94–126, 130–164, and 168–199; these read NGCT…DPNI, DGNT…DIEL, and LGWT…DNDF.

The protein is Putative ankyrin repeat protein RF_0314 of Rickettsia felis (strain ATCC VR-1525 / URRWXCal2) (Rickettsia azadi).